A 427-amino-acid chain; its full sequence is Capsid vertex protein (427 aa).

It belongs to the Tevenvirinae capsid vertex family. Homopentamer. Interacts with the portal protein. Interacts with the major capsid protein that forms hexamers. In terms of processing, proteolytic cleavage at the N-terminus by the prohead core protein protease gives rise to the mature capsid vertex protein.

The protein localises to the virion. Its function is as follows. Capsid protein that self-associates to form pentons, building the capsid in association with hexamers of the major capsid protein and one dodecamer of the portal protein. The capsid vertex protein self-associates to form 11 pentons, building the T=13 laevo capsid in association with 160 hexamers of the major capsid protein. The sequence is that of Capsid vertex protein from Escherichia coli O157:H7 (Bacteriophage AR1).